The sequence spans 594 residues: AT-rich interactive domain-containing protein 5A (594 aa).

The interval 1–56 (MAAPVKGNRKQSTEGDALDPPASPKPAGKQNGIQNPISLEDSPEAGGEREEEQERE) is disordered. The interaction with SOX9 stretch occupies residues 1–300 (MAAPVKGNRK…AVHLPESPQS (300 aa)). The residue at position 23 (serine 23) is a Phosphoserine. Residues 55 to 147 (REEEQAFLVS…LVLPYVRHLK (93 aa)) form the ARID domain. Residues lysine 85 and lysine 94 each participate in a glycyl lysine isopeptide (Lys-Gly) (interchain with G-Cter in ubiquitin) cross-link. The disordered stretch occupies residues 146-223 (LKGEDDKPLP…NSTEQQGLAS (78 aa)). Over residues 165-189 (MAKENRGDDGATERPKKAKEERRMD) the composition is skewed to basic and acidic residues. Residues serine 256 and serine 289 each carry the phosphoserine modification. Disordered stretches follow at residues 281-331 (RHGA…EAQA) and 426-454 (AESP…GAAH). The segment covering 297 to 306 (SPQSPKGLTE) has biased composition (polar residues). Serine 438 and serine 463 each carry phosphoserine.

As to quaternary structure, interacts with SOX9. Interacts with ESR1. Interacts with RORC. In terms of processing, phosphorylated by MAPK14 on serine residues involving a TLR4 signaling pathway upon lipopolysaccharide (LPS) stimulation leading to its ubiquitination and proteasomal degradation. Ubiquitinated leading to proteasomal degradation; involving WWP1 linked to MAPK14-mediated phosphorylation upon LPS stimulation.

It is found in the nucleus. In terms of biological role, DNA-binding protein that may regulate transcription and act as a repressor by binding to AT-rich stretches in the promoter region of target genes. May positively regulate chondrocyte-specific transcription such as of COL2A1 in collaboration with SOX9 and positively regulate histone H3 acetylation at chondrocyte-specific genes. May stimulate early-stage chondrocyte differentiation and inhibit later stage differention. Can repress ESR1-mediated transcriptional activation; proposed to act as corepressor for selective nuclear hormone receptors. As an RNA-binding protein, involved in the regulation of inflammatory response by stabilizing selective inflammation-related mRNAs, such as STAT3 and TBX21. Also stabilizes IL6 mRNA. Binds to stem loop structures located in the 3'UTRs of IL6, STAT3 and TBX21 mRNAs; at least for STAT3 prevents binding of ZC3H12A to the mRNA stem loop structure thus inhibiting its degradation activity. Contributes to elevated IL6 levels possibly implicated in autoimmunity processes. IL6-dependent stabilization of STAT3 mRNA may promote differentiation of naive CD4+ T-cells into T-helper Th17 cells. In CD4+ T-cells may also inhibit RORC-induced Th17 cell differentiation independently of IL6 signaling. Stabilization of TBX21 mRNA contributes to elevated interferon-gamma secretion in Th1 cells possibly implicated in the establishment of septic shock. Stabilizes TNFRSF4/OX40 mRNA by binding to the conserved stem loop structure in its 3'UTR; thereby competing with the mRNA-destabilizing functions of RC3H1 and endoribonuclease ZC3H12A. This Homo sapiens (Human) protein is AT-rich interactive domain-containing protein 5A (ARID5A).